Here is a 595-residue protein sequence, read N- to C-terminus: NADPH-dependent diflavin oxidoreductase 1 (595 aa).

Residues 6–150 form the Flavodoxin-like domain; that stretch reads VLVLYGSQTG…VIDPWLLSFW (145 aa). FMN is bound by residues 12 to 17, 59 to 62, 97 to 106, and Asp-132; these read SQTGTA, ATTG, and LGDSSYPKFN. Residues 204-444 enclose the FAD-binding FR-type domain; it reads LRPFPAPLVF…WVKKGSLKFP (241 aa). Residues Arg-348, 380–383, and 414–417 each bind FAD; these read RSFS and GLCS. Residues Thr-458, 513-514, and 519-523 each bind NADP(+); these read SR and KVYVQ. Trp-594 provides a ligand contact to FAD.

Belongs to the NADPH-dependent diflavin oxidoreductase NDOR1 family. The protein in the N-terminal section; belongs to the flavodoxin family. It in the C-terminal section; belongs to the flavoprotein pyridine nucleotide cytochrome reductase family. Interacts with ciapin1; as part of the cytosolic iron-sulfur (Fe-S) protein assembly (CIA) machinery. Requires FAD as cofactor. FMN is required as a cofactor.

It is found in the cytoplasm. The protein resides in the perinuclear region. It catalyses the reaction 2 oxidized [2Fe-2S]-[protein] + NADPH = 2 reduced [2Fe-2S]-[protein] + NADP(+) + H(+). In terms of biological role, NADPH-dependent reductase which is a central component of the cytosolic iron-sulfur (Fe-S) protein assembly (CIA) machinery. Transfers electrons from NADPH via its FAD and FMN prosthetic groups to the [2Fe-2S] cluster of ciapin1, another key component of the CIA machinery. In turn, this reduced cluster provides electrons for assembly of cytosolic iron-sulfur cluster proteins. It can also reduce the [2Fe-2S] cluster of cisd1 and activate this protein implicated in Fe/S cluster repair. This chain is NADPH-dependent diflavin oxidoreductase 1, found in Danio rerio (Zebrafish).